A 990-amino-acid chain; its full sequence is Pentatricopeptide repeat-containing protein At4g33170 (990 aa).

PPR repeat units follow at residues 73-107, 109-139, 144-178, 179-209, 210-244, 279-313, 314-348, 349-379, 380-414, 415-450, 451-477, 481-515, 516-550, 551-581, 582-616, 617-651, 652-682, 683-717, 718-753, and 754-788; these read ERFL…DLVS, NSIL…LRQD, SRMT…GLDG, DEFV…MPYR, DVVL…GLNP, EIIF…DVEC, DQVT…GLDL, MLTV…MSER, DLIS…GLKP, DQYT…NNVS, DSFV…LFER, DLVA…GERS, DDFT…GYDL, DLWV…IPVP, DDVA…GVLP, DEFT…NCTN, DPFV…IEMM, NITA…GIKP, DKVT…GIKP, and EIEH…ASAS. The segment at 789–864 is type E motif; it reads MYRTLLAACR…DPGFSWIEVK (76 aa). The interval 865 to 895 is type E(+) motif; the sequence is NKIHIFVVDDRSNRQTELIYRKVKDMIRDIK. The tract at residues 896 to 990 is type DYW motif; the sequence is QEGYVPETDF…DGICSCGDYW (95 aa).

Belongs to the PPR family. PCMP-H subfamily.

This chain is Pentatricopeptide repeat-containing protein At4g33170 (PCMP-H53), found in Arabidopsis thaliana (Mouse-ear cress).